Consider the following 354-residue polypeptide: NADPH dehydrogenase (354 aa).

Residues Ser23, Pro24, Cys26, Ala58, and Gln100 each contribute to the FMN site. Tyr182 (proton donor) is an active-site residue. FMN-binding residues include Arg230, Leu301, Gly323, and Arg324.

The protein belongs to the NADH:flavin oxidoreductase/NADH oxidase family. NamA subfamily. As to quaternary structure, homodimer. Behaves as an active monomer in solution while in the crystal packing assembles following the classical dimeric architecture of other thermophilic-like ene-reductases. FMN is required as a cofactor.

The enzyme catalyses A + NADPH + H(+) = AH2 + NADP(+). In terms of biological role, ene-reductase that catalyzes the stereoselective reduction of activated C-C double bonds. Shows very good activity with 4-ketoisophorone, 2-cyclohexen-1-one and 1-octen-3-one, and low activity with maleimide, 2-methyl-pentenal, 2-methyl-cyclohexen-1-one, 2-cyclopenten-1-one and trans-2-hexen-1-al. Shows the highest catalytic efficiency with ketoisophorone. Exhibits a restricted substrate spectrum with generally lower activities compared to other ene-reductases. This Chloroflexus aggregans (strain MD-66 / DSM 9485) protein is NADPH dehydrogenase.